A 153-amino-acid polypeptide reads, in one-letter code: AEFERTFIAIKPDGVQRGLISEIVARFERKGFSLVAIKVVIPSRPFAQKHYADLKDKPFYVGLVAYWSSGPVVAMVWEGEGVIKYGRKLIGATDPQKSEPGTIRGDLAVVNGRNIIHGSDGPETAKDEIKLWFKPEELVNYTHNAEKWIYGDN.

Residues Lys11, Phe59, Arg87, Thr93, Arg104, and Asn114 each contribute to the ATP site. His117 (pros-phosphohistidine intermediate) is an active-site residue.

This sequence belongs to the NDK family. Homohexamer. Requires Mg(2+) as cofactor.

It localises to the plastid. The protein localises to the chloroplast thylakoid lumen. The catalysed reaction is a 2'-deoxyribonucleoside 5'-diphosphate + ATP = a 2'-deoxyribonucleoside 5'-triphosphate + ADP. It catalyses the reaction a ribonucleoside 5'-diphosphate + ATP = a ribonucleoside 5'-triphosphate + ADP. Major role in the synthesis of nucleoside triphosphates other than ATP. The ATP gamma phosphate is transferred to the NDP beta phosphate via a ping-pong mechanism, using a phosphorylated active-site intermediate. Shows the highest specificity towards GDP. This Spinacia oleracea (Spinach) protein is Nucleoside diphosphate kinase 3.